Reading from the N-terminus, the 327-residue chain is Biotin synthase (327 aa).

One can recognise a Radical SAM core domain in the interval 49–282 (FNKEKIDLCS…KKVIRLCGGR (234 aa)). [4Fe-4S] cluster contacts are provided by cysteine 67, cysteine 71, and cysteine 74. Residues serine 110, cysteine 142, cysteine 201, and arginine 277 each contribute to the [2Fe-2S] cluster site.

This sequence belongs to the radical SAM superfamily. Biotin synthase family. In terms of assembly, homodimer. [4Fe-4S] cluster is required as a cofactor. It depends on [2Fe-2S] cluster as a cofactor.

The catalysed reaction is (4R,5S)-dethiobiotin + (sulfur carrier)-SH + 2 reduced [2Fe-2S]-[ferredoxin] + 2 S-adenosyl-L-methionine = (sulfur carrier)-H + biotin + 2 5'-deoxyadenosine + 2 L-methionine + 2 oxidized [2Fe-2S]-[ferredoxin]. Its pathway is cofactor biosynthesis; biotin biosynthesis; biotin from 7,8-diaminononanoate: step 2/2. Catalyzes the conversion of dethiobiotin (DTB) to biotin by the insertion of a sulfur atom into dethiobiotin via a radical-based mechanism. In Methanococcus maripaludis (strain C7 / ATCC BAA-1331), this protein is Biotin synthase.